The primary structure comprises 296 residues: Formamidopyrimidine-DNA glycosylase (296 aa).

P2 functions as the Schiff-base intermediate with DNA in the catalytic mechanism. Residue E3 is the Proton donor of the active site. K58 acts as the Proton donor; for beta-elimination activity in catalysis. Residues H104, R126, and K169 each contribute to the DNA site. Residues 260-296 (SVYDREGQACGTPGCGGTVARIVQAGRSTFYCAACQK) form an FPG-type zinc finger. R286 (proton donor; for delta-elimination activity) is an active-site residue.

The protein belongs to the FPG family. As to quaternary structure, monomer. The cofactor is Zn(2+).

It catalyses the reaction Hydrolysis of DNA containing ring-opened 7-methylguanine residues, releasing 2,6-diamino-4-hydroxy-5-(N-methyl)formamidopyrimidine.. The enzyme catalyses 2'-deoxyribonucleotide-(2'-deoxyribose 5'-phosphate)-2'-deoxyribonucleotide-DNA = a 3'-end 2'-deoxyribonucleotide-(2,3-dehydro-2,3-deoxyribose 5'-phosphate)-DNA + a 5'-end 5'-phospho-2'-deoxyribonucleoside-DNA + H(+). Its function is as follows. Involved in base excision repair of DNA damaged by oxidation or by mutagenic agents. Acts as a DNA glycosylase that recognizes and removes damaged bases. Has a preference for oxidized purines, such as 7,8-dihydro-8-oxoguanine (8-oxoG). Has AP (apurinic/apyrimidinic) lyase activity and introduces nicks in the DNA strand. Cleaves the DNA backbone by beta-delta elimination to generate a single-strand break at the site of the removed base with both 3'- and 5'-phosphates. This Rhizobium etli (strain ATCC 51251 / DSM 11541 / JCM 21823 / NBRC 15573 / CFN 42) protein is Formamidopyrimidine-DNA glycosylase.